An 895-amino-acid polypeptide reads, in one-letter code: Glutamate receptor 2.3 (895 aa).

The first 23 residues, 1 to 23 (MRTEKLFFCILLVFFFCLEFNRG), serve as a signal peptide directing secretion. The Extracellular portion of the chain corresponds to 24-582 (QNNGKTLVDV…ILFMKPLSWK (559 aa)). N52, N203, N266, N330, N342, N477, and N542 each carry an N-linked (GlcNAc...) asparagine glycan. Residues 583-603 (LWLTSFISFFLVGCTVWVLEY) traverse the membrane as a helical segment. Residues 604 to 610 (KRNPDFS) lie on the Cytoplasmic side of the membrane. The chain crosses the membrane as a helical span at residues 611–631 (GPPRFQASTICWFAFSTMVFA). Over 632 to 635 (PRER) the chain is Cytoplasmic. The helical transmembrane segment at 636 to 656 (VFSFWARALVIAWYFLVLVLT) threads the bilayer. Topologically, residues 657–830 (QSYTASLASL…FTSRQLDIDS (174 aa)) are extracellular. A helical membrane pass occupies residues 831–851 (FLFLFVGVLLVCVMALGNFTY). At 852–895 (CFLAKDQVSYLDKVEMSPCSSSQQMPVKRKTQLNMSQVHDQDSL) the chain is on the cytoplasmic side. The disordered stretch occupies residues 873–895 (SQQMPVKRKTQLNMSQVHDQDSL).

This sequence belongs to the glutamate-gated ion channel (TC 1.A.10.1) family. May form heteromers. Expressed predominantly in roots.

The protein resides in the membrane. In terms of biological role, glutamate-gated receptor that probably acts as a non-selective cation channel. May be involved in light-signal transduction and calcium homeostasis via the regulation of calcium influx into cells. This is Glutamate receptor 2.3 (GLR2.3) from Arabidopsis thaliana (Mouse-ear cress).